Here is a 932-residue protein sequence, read N- to C-terminus: DNA mismatch repair protein MutS (932 aa).

615-622 (GPNMAGKS) is an ATP binding site.

The protein belongs to the DNA mismatch repair MutS family.

Its function is as follows. This protein is involved in the repair of mismatches in DNA. It is possible that it carries out the mismatch recognition step. This protein has a weak ATPase activity. This Clostridium botulinum (strain Loch Maree / Type A3) protein is DNA mismatch repair protein MutS.